The primary structure comprises 609 residues: UvrABC system protein C (609 aa).

Positions 16-94 constitute a GIY-YIG domain; the sequence is SSAGVYRMYD…IKQYMPKYNV (79 aa). Residues 203–238 form the UVR domain; sequence KQVISELVAKMEEAAEQQAYEQAARFRDQIMALRRV.

It belongs to the UvrC family. In terms of assembly, interacts with UvrB in an incision complex.

It is found in the cytoplasm. Its function is as follows. The UvrABC repair system catalyzes the recognition and processing of DNA lesions. UvrC both incises the 5' and 3' sides of the lesion. The N-terminal half is responsible for the 3' incision and the C-terminal half is responsible for the 5' incision. This chain is UvrABC system protein C, found in Shewanella sp. (strain MR-4).